Here is a 336-residue protein sequence, read N- to C-terminus: Protein-lysine N-methyltransferase EFM3 (336 aa).

Residues tryptophan 147, 173–175 (GTG), aspartate 196, leucine 232, and alanine 251 each bind S-adenosyl-L-methionine.

Belongs to the class I-like SAM-binding methyltransferase superfamily. EEF2KMT family.

The protein resides in the cytoplasm. S-adenosyl-L-methionine-dependent protein-lysine N-methyltransferase that methylates elongation factor 2. The protein is Protein-lysine N-methyltransferase EFM3 of Chaetomium thermophilum (strain DSM 1495 / CBS 144.50 / IMI 039719) (Thermochaetoides thermophila).